Consider the following 285-residue polypeptide: 4-diphosphocytidyl-2-C-methyl-D-erythritol kinase (285 aa).

Lys-11 is an active-site residue. 93–103 provides a ligand contact to ATP; the sequence is PLAAGLAGGSA. Asp-135 is a catalytic residue.

This sequence belongs to the GHMP kinase family. IspE subfamily.

The catalysed reaction is 4-CDP-2-C-methyl-D-erythritol + ATP = 4-CDP-2-C-methyl-D-erythritol 2-phosphate + ADP + H(+). The protein operates within isoprenoid biosynthesis; isopentenyl diphosphate biosynthesis via DXP pathway; isopentenyl diphosphate from 1-deoxy-D-xylulose 5-phosphate: step 3/6. Its function is as follows. Catalyzes the phosphorylation of the position 2 hydroxy group of 4-diphosphocytidyl-2C-methyl-D-erythritol. The sequence is that of 4-diphosphocytidyl-2-C-methyl-D-erythritol kinase from Moorella thermoacetica (strain ATCC 39073 / JCM 9320).